We begin with the raw amino-acid sequence, 579 residues long: MGLCCSCLRGESSLEDSTGLPIAENEREAVTSLLEFLENKDQYDFYSGKPLRALTTLVYSDNLNLQRSAALAFAEITEKYVSPVSRDVLEPILMLLTNPDPQIRIASCAALGNLAVNNENKLLIVEMGGLEPLIEQMKSDNVEVQCNAVGCITNLATQDDNKIEIAQSGALVPLTKLARSSNIRVQRNATGALLNMTHSGENRKELVDAGAVPVLVSLLSSMDADVQYYCTTALSNIAVDESNRRYLSKHAPKLVTKLVSLMNSTSPRVKCQATLALRNLASDTNYQLEIVRAGGLPDLVQLIQSDSLPLVLASVACIRNISIHPLNEGLIVDAGFLPPLVKLLDYQESEEIQCHAVSTLRNLAASSEKNRAEFFQSGVIEKFKQLALTCPISVQSEISACFAILALSDNTKYDLLQQDVLKVLIPMTMSQDQEISGNSAAAVANLISRVSNLEKILEYWGQPNDGIKGFLIRFLSSDFPTYEHIALWTILQLFECHNETIYKLIKEDQKLVNGVKKIADENYAVAREYMQDGQDTNIDHNGNSNNIEGNGRSNKQSSEKEDASFELYNITQQIIQFLV.

A lipid anchor (N-myristoyl glycine) is attached at Gly-2. Residues Cys-4, Cys-5, and Cys-7 are each lipidated (S-palmitoyl cysteine). 9 ARM repeats span residues 39 to 76 (NKDQYDFYSGKPLRALTTLVYSDNLNLQRSAALAFAEI), 77 to 116 (TEKYVSPVSRDVLEPILMLLTNPDPQIRIASCAALGNLAV), 118 to 157 (NENKLLIVEMGGLEPLIEQMKSDNVEVQCNAVGCITNLAT), 159 to 198 (DDNKIEIAQSGALVPLTKLARSSNIRVQRNATGALLNMTH), 200 to 239 (GENRKELVDAGAVPVLVSLLSSMDADVQYYCTTALSNIAV), 241 to 282 (ESNR…NLAS), 284 to 323 (TNYQLEIVRAGGLPDLVQLIQSDSLPLVLASVACIRNISI), 325 to 365 (PLNE…NLAA), and 409 to 448 (DNTKYDLLQQDVLKVLIPMTMSQDQEISGNSAAAVANLIS). Residues 534 to 556 (QDTNIDHNGNSNNIEGNGRSNKQ) show a composition bias toward polar residues. Residues 534–560 (QDTNIDHNGNSNNIEGNGRSNKQSSEK) form a disordered region.

It belongs to the beta-catenin family.

It localises to the vacuole membrane. Functionally, functions in both vacuole inheritance and protein targeting from the cytoplasm to vacuole. The polypeptide is Vacuolar protein 8 (VAC8) (Kluyveromyces lactis (strain ATCC 8585 / CBS 2359 / DSM 70799 / NBRC 1267 / NRRL Y-1140 / WM37) (Yeast)).